A 978-amino-acid chain; its full sequence is Chaperone protein ClpB2, chloroplastic (978 aa).

Residues 1-76 (MAAAPPLAAG…RMPPRTLSVR (76 aa)) constitute a chloroplast transit peptide. Residues 85-229 (TQQEFTEMAW…KTAIESIRGK (145 aa)) form the Clp R domain. Repeat stretches follow at residues 89–154 (FTEM…IQRQ) and 166–229 (LGRD…IRGK). Positions 244–492 (LDKYGKDLTA…KLKMEITSKP (249 aa)) are i. ATP-binding positions include 289–296 (GEPGVGKT) and 692–699 (GPTGVGKT). Residues 618–809 (VTQDDIAEIV…IIIMTSNVGS (192 aa)) form an II region.

It belongs to the ClpA/ClpB family.

It localises to the plastid. Its subcellular location is the chloroplast. Functionally, molecular chaperone that may play a role in chloroplast development. The polypeptide is Chaperone protein ClpB2, chloroplastic (CLPB2) (Oryza sativa subsp. japonica (Rice)).